A 537-amino-acid chain; its full sequence is Phosphoenolpyruvate carboxykinase (ATP) (537 aa).

Residues Arg61, Tyr194, and Lys200 each coordinate substrate. Residues Lys200, His219, and 235–243 (GLSGTGKTT) each bind ATP. Mn(2+) is bound by residues Lys200 and His219. Asp256 provides a ligand contact to Mn(2+). Residues Glu284, Arg322, and Thr448 each contribute to the ATP site. Arg322 provides a ligand contact to substrate.

It belongs to the phosphoenolpyruvate carboxykinase (ATP) family. It depends on Mn(2+) as a cofactor.

It localises to the cytoplasm. It catalyses the reaction oxaloacetate + ATP = phosphoenolpyruvate + ADP + CO2. The protein operates within carbohydrate biosynthesis; gluconeogenesis. Its function is as follows. Involved in the gluconeogenesis. Catalyzes the conversion of oxaloacetate (OAA) to phosphoenolpyruvate (PEP) through direct phosphoryl transfer between the nucleoside triphosphate and OAA. The chain is Phosphoenolpyruvate carboxykinase (ATP) from Bradyrhizobium sp. (strain ORS 278).